A 329-amino-acid polypeptide reads, in one-letter code: MAP kinase-activated protein kinase 2 (329 aa).

ATP is bound by residues 1–7 (LGINGKV) and K22. One can recognise a Protein kinase domain in the interval 1 to 254 (LGINGKVLRI…ITEFMNHPWI (254 aa)). 68-70 (ECL) lines the staurosporine pocket. D115 functions as the Proton acceptor in the catalytic mechanism. Position 151 is a phosphothreonine; by MAPK14 (T151). S201 bears the Phosphoserine; by MAPK14 mark. S257 bears the Phosphoserine; by autocatalysis mark. Positions 257 to 293 (STKVPQTPLHTSRVLKEDKERWEDVKEEMTSALATMR) are autoinhibitory helix. A Phosphothreonine; by MAPK14 modification is found at T263. K282 is covalently cross-linked (Glycyl lysine isopeptide (Lys-Gly) (interchain with G-Cter in SUMO)). The short motif at 285 to 294 (MTSALATMRV) is the Nuclear export signal (NES) element. Positions 295-319 (DYEQIKIKKIEDASNPLLLKRRKKA) are p38 MAPK-binding site. 2 short sequence motifs (bipartite nuclear localization signal) span residues 300 to 303 (KIKK) and 314 to 318 (KRRKK).

This sequence belongs to the protein kinase superfamily. CAMK Ser/Thr protein kinase family. As to quaternary structure, heterodimer with p38-alpha/MAPK14; this heterodimer forms a stable complex: molecules are positioned 'face to face' so that the ATP-binding sites of both kinases are at the heterodimer interface. Interacts with PHC2. Interacts with HSF1. Post-translationally, sumoylation inhibits the protein kinase activity. In terms of processing, phosphorylated and activated by MAP kinase p38-alpha/MAPK14 at Thr-151, Ser-201 and Thr-263.

It localises to the cytoplasm. It is found in the nucleus. It catalyses the reaction L-seryl-[protein] + ATP = O-phospho-L-seryl-[protein] + ADP + H(+). The enzyme catalyses L-threonyl-[protein] + ATP = O-phospho-L-threonyl-[protein] + ADP + H(+). Activated following phosphorylation by p38-alpha/MAPK14 following various stresses. Inhibited following sumoylation. Specifically inhibited by pyrrolopyridine inhibitors. Its function is as follows. Stress-activated serine/threonine-protein kinase involved in cytokine production, endocytosis, reorganization of the cytoskeleton, cell migration, cell cycle control, chromatin remodeling, DNA damage response and transcriptional regulation. Following stress, it is phosphorylated and activated by MAP kinase p38-alpha/MAPK14, leading to phosphorylation of substrates. Phosphorylates serine in the peptide sequence, Hyd-X-R-X(2)-S, where Hyd is a large hydrophobic residue. Phosphorylates ALOX5, CDC25B, CDC25C, CEP131, ELAVL1, HNRNPA0, HSP27/HSPB1, KRT18, KRT20, LIMK1, LSP1, PABPC1, PARN, PDE4A, RCSD1, RPS6KA3, TAB3 and TTP/ZFP36. Phosphorylates HSF1; leading to the interaction with HSP90 proteins and inhibiting HSF1 homotrimerization, DNA-binding and transactivation activities. Mediates phosphorylation of HSP27/HSPB1 in response to stress, leading to the dissociation of HSP27/HSPB1 from large small heat-shock protein (sHsps) oligomers and impairment of their chaperone activities and ability to protect against oxidative stress effectively. Involved in inflammatory response by regulating tumor necrosis factor (TNF) and IL6 production post-transcriptionally: acts by phosphorylating AU-rich elements (AREs)-binding proteins ELAVL1, HNRNPA0, PABPC1 and TTP/ZFP36, leading to regulation of the stability and translation of TNF and IL6 mRNAs. Phosphorylation of TTP/ZFP36, a major post-transcriptional regulator of TNF, promotes its binding to 14-3-3 proteins and reduces its ARE mRNA affinity, leading to inhibition of dependent degradation of ARE-containing transcripts. Phosphorylates CEP131 in response to cellular stress following ultraviolet irradiation which promotes binding of CEP131 to 14-3-3 proteins and inhibits formation of novel centriolar satellites. Also involved in late G2/M checkpoint following DNA damage through a process of post-transcriptional mRNA stabilization: following DNA damage, relocalizes from nucleus to cytoplasm and phosphorylates HNRNPA0 and PARN, leading to stabilization of GADD45A mRNA. Involved in toll-like receptor signaling pathway (TLR) in dendritic cells: required for acute TLR-induced macropinocytosis by phosphorylating and activating RPS6KA3. This Cricetulus longicaudatus (Long-tailed dwarf hamster) protein is MAP kinase-activated protein kinase 2 (MAPKAPK2).